A 152-amino-acid polypeptide reads, in one-letter code: uncharacterized protein (152 aa).

It belongs to the antirestriction protein family.

This is an uncharacterized protein from Escherichia coli (strain K12).